We begin with the raw amino-acid sequence, 860 residues long: DNA mismatch repair protein MutS (860 aa).

618–625 is a binding site for ATP; it reads GPNMGGKS.

This sequence belongs to the DNA mismatch repair MutS family.

This protein is involved in the repair of mismatches in DNA. It is possible that it carries out the mismatch recognition step. This protein has a weak ATPase activity. The sequence is that of DNA mismatch repair protein MutS from Shewanella piezotolerans (strain WP3 / JCM 13877).